The primary structure comprises 300 residues: Cholesterol 25-hydroxylase-like protein (300 aa).

The N-linked (GlcNAc...) asparagine glycan is linked to Asn9. 3 consecutive transmembrane segments (helical) span residues Tyr54–Phe73, Leu95–Val115, and Met130–Asn152. Residues Ala135–Gly266 form the Fatty acid hydroxylase domain. A Histidine box-1 motif is present at residues Phe148–Asn152. The short motif at His163–His167 is the Histidine box-2 element. The chain crosses the membrane as a helical span at residues Ile192 to Ile212. A Histidine box-3 motif is present at residues Ala242–Leu248.

This sequence belongs to the sterol desaturase family. It depends on Fe cation as a cofactor.

It is found in the membrane. Probable sterol desaturase. This Caenorhabditis elegans protein is Cholesterol 25-hydroxylase-like protein.